The chain runs to 85 residues: Small ribosomal subunit protein bS18 (85 aa).

The protein belongs to the bacterial ribosomal protein bS18 family. In terms of assembly, part of the 30S ribosomal subunit. Forms a tight heterodimer with protein bS6.

Its function is as follows. Binds as a heterodimer with protein bS6 to the central domain of the 16S rRNA, where it helps stabilize the platform of the 30S subunit. This is Small ribosomal subunit protein bS18 from Hyphomonas neptunium (strain ATCC 15444).